The sequence spans 124 residues: Large ribosomal subunit protein bL21 (124 aa).

Residues 105–124 (NAPSIGPRVRKAKPAAEAAE) form a disordered region.

This sequence belongs to the bacterial ribosomal protein bL21 family. In terms of assembly, part of the 50S ribosomal subunit. Contacts protein L20.

Its function is as follows. This protein binds to 23S rRNA in the presence of protein L20. The chain is Large ribosomal subunit protein bL21 from Rhodopseudomonas palustris (strain BisA53).